Reading from the N-terminus, the 110-residue chain is Phosphoribosyl-AMP cyclohydrolase (110 aa).

Aspartate 74 provides a ligand contact to Mg(2+). A Zn(2+)-binding site is contributed by cysteine 75. Residues aspartate 76 and aspartate 78 each coordinate Mg(2+). Residues cysteine 91 and cysteine 98 each coordinate Zn(2+).

Belongs to the PRA-CH family. Homodimer. The cofactor is Mg(2+). It depends on Zn(2+) as a cofactor.

The protein resides in the cytoplasm. It catalyses the reaction 1-(5-phospho-beta-D-ribosyl)-5'-AMP + H2O = 1-(5-phospho-beta-D-ribosyl)-5-[(5-phospho-beta-D-ribosylamino)methylideneamino]imidazole-4-carboxamide. It participates in amino-acid biosynthesis; L-histidine biosynthesis; L-histidine from 5-phospho-alpha-D-ribose 1-diphosphate: step 3/9. Catalyzes the hydrolysis of the adenine ring of phosphoribosyl-AMP. In Lacticaseibacillus casei (strain BL23) (Lactobacillus casei), this protein is Phosphoribosyl-AMP cyclohydrolase.